The following is a 377-amino-acid chain: Glutamate 5-kinase (377 aa).

Position 18 (K18) interacts with ATP. The substrate site is built by S55, D142, and N154. ATP contacts are provided by residues 174–175 (SD) and 216–222 (TGGMKSK). A PUA domain is found at 281-359 (QGEVVVDAGA…REIEALLGYK (79 aa)).

This sequence belongs to the glutamate 5-kinase family.

The protein resides in the cytoplasm. The catalysed reaction is L-glutamate + ATP = L-glutamyl 5-phosphate + ADP. It participates in amino-acid biosynthesis; L-proline biosynthesis; L-glutamate 5-semialdehyde from L-glutamate: step 1/2. Functionally, catalyzes the transfer of a phosphate group to glutamate to form L-glutamate 5-phosphate. The polypeptide is Glutamate 5-kinase (Meiothermus ruber).